Consider the following 540-residue polypeptide: Zona pellucida sperm-binding protein 4 (540 aa).

The N-terminal stretch at 1–18 is a signal peptide; the sequence is MWLLRCVLLCVSLSLAVS. Topologically, residues 19–505 are extracellular; that stretch reads GQHKPEAPDY…EKLRVPVDSK (487 aa). An N-linked (GlcNAc...) asparagine glycan is attached at Asn-69. One can recognise a P-type domain in the interval 141–183; sequence DWCDSIPARDRLPCAPSPISRGDCEGLGCCYSSEEVNSCYYGN. In terms of domain architecture, ZP spans 188-466; the sequence is HCTREGHFSI…VTCPDLSRRR (279 aa). N-linked (GlcNAc...) asparagine glycans are attached at residues Asn-202, Asn-219, and Asn-267. Thr-302 carries O-linked (GalNAc...) threonine glycosylation. A disulfide bridge links Cys-367 with Cys-442. Residues 463–540 constitute a propeptide, removed in mature form; sequence SRRRNFDNSS…QKSCPDQMCQ (78 aa). Residues Asn-470 and Asn-474 are each glycosylated (N-linked (GlcNAc...) asparagine). The chain crosses the membrane as a helical span at residues 506 to 526; that stretch reads VLWVAGLSGTLILGALLVSYL. Over 527 to 540 the chain is Cytoplasmic; sequence AVKKQKSCPDQMCQ.

It belongs to the ZP domain family. ZPB subfamily. In terms of processing, proteolytically cleaved before the transmembrane segment to yield the secreted ectodomain incorporated in the zona pellucida. Expressed in oocytes.

Its subcellular location is the zona pellucida. The protein localises to the cell membrane. Component of the zona pellucida, an extracellular matrix surrounding oocytes which mediates sperm binding, induction of the acrosome reaction and prevents post-fertilization polyspermy. The zona pellucida is composed of 3 to 4 glycoproteins, ZP1, ZP2, ZP3, and ZP4. ZP4 may act as a sperm receptor. The polypeptide is Zona pellucida sperm-binding protein 4 (ZP4) (Homo sapiens (Human)).